Reading from the N-terminus, the 426-residue chain is uncharacterized protein (426 aa).

His-277 provides a ligand contact to Zn(2+). Glu-278 is a catalytic residue. The Zn(2+) site is built by His-281 and Glu-357.

The protein belongs to the peptidase M48B family. Zn(2+) is required as a cofactor.

This is an uncharacterized protein from Bacillus subtilis (strain 168).